Reading from the N-terminus, the 123-residue chain is cAMP-responsive element-binding protein-like 2 (123 aa).

Positions 1 to 24 (MDDSKVVGGKVKKPGKRGRKPAKI) are disordered. Over residues 10-21 (KVKKPGKRGRKP) the composition is skewed to basic residues. The bZIP domain occupies 23 to 86 (KIDLKAKLER…MAMDQGKIPS (64 aa)). The interval 29–60 (KLERSRQSARECRARKKLRYQYLEELVSSRER) is basic motif. The interval 62-69 (ICALREEL) is leucine-zipper. The disordered stretch occupies residues 92–123 (LTGEEQSKPQQNSSRHPKAGKTDANTNSLVGN). The span at 114–123 (DANTNSLVGN) shows a compositional bias: polar residues.

Belongs to the bZIP family. ATF subfamily. Interacts with CREB1; regulates CREB1 phosphorylation, stability and transcriptional activity. Post-translationally, phosphorylated by AMPK. As to expression, widely expressed with higher expression in adipose tissue, skeletal muscle, and liver (at protein level).

Its subcellular location is the nucleus. Probable regulator of CREB1 transcriptional activity which is involved in adipose cells differentiation. May also play a regulatory role in the cell cycle. The chain is cAMP-responsive element-binding protein-like 2 (Crebl2) from Mus musculus (Mouse).